The chain runs to 180 residues: NAD(P)H-quinone oxidoreductase subunit I, chloroplastic (180 aa).

4Fe-4S ferredoxin-type domains follow at residues 55-84 (GRIHFEFDKCIACEVCVRVCPIDLPVVDWR) and 95-124 (LNYSIDFGICIFCGNCVEYCPTNCLSMTEE). [4Fe-4S] cluster contacts are provided by Cys-64, Cys-67, Cys-70, Cys-74, Cys-104, Cys-107, Cys-110, and Cys-114.

It belongs to the complex I 23 kDa subunit family. In terms of assembly, NDH is composed of at least 16 different subunits, 5 of which are encoded in the nucleus. [4Fe-4S] cluster serves as cofactor.

Its subcellular location is the plastid. The protein localises to the chloroplast thylakoid membrane. The enzyme catalyses a plastoquinone + NADH + (n+1) H(+)(in) = a plastoquinol + NAD(+) + n H(+)(out). It carries out the reaction a plastoquinone + NADPH + (n+1) H(+)(in) = a plastoquinol + NADP(+) + n H(+)(out). NDH shuttles electrons from NAD(P)H:plastoquinone, via FMN and iron-sulfur (Fe-S) centers, to quinones in the photosynthetic chain and possibly in a chloroplast respiratory chain. The immediate electron acceptor for the enzyme in this species is believed to be plastoquinone. Couples the redox reaction to proton translocation, and thus conserves the redox energy in a proton gradient. This Drimys granadensis protein is NAD(P)H-quinone oxidoreductase subunit I, chloroplastic.